Consider the following 496-residue polypeptide: Probable cytosol aminopeptidase (496 aa).

Mn(2+)-binding residues include Lys267 and Asp272. Lys279 is a catalytic residue. Positions 290, 349, and 351 each coordinate Mn(2+). Residue Arg353 is part of the active site.

This sequence belongs to the peptidase M17 family. Mn(2+) is required as a cofactor.

The protein resides in the cytoplasm. The enzyme catalyses Release of an N-terminal amino acid, Xaa-|-Yaa-, in which Xaa is preferably Leu, but may be other amino acids including Pro although not Arg or Lys, and Yaa may be Pro. Amino acid amides and methyl esters are also readily hydrolyzed, but rates on arylamides are exceedingly low.. It catalyses the reaction Release of an N-terminal amino acid, preferentially leucine, but not glutamic or aspartic acids.. In terms of biological role, presumably involved in the processing and regular turnover of intracellular proteins. Catalyzes the removal of unsubstituted N-terminal amino acids from various peptides. This Methylobacillus flagellatus (strain ATCC 51484 / DSM 6875 / VKM B-1610 / KT) protein is Probable cytosol aminopeptidase.